A 141-amino-acid chain; its full sequence is Large ribosomal subunit protein uL11 (141 aa).

Belongs to the universal ribosomal protein uL11 family. As to quaternary structure, part of the ribosomal stalk of the 50S ribosomal subunit. Interacts with L10 and the large rRNA to form the base of the stalk. L10 forms an elongated spine to which L12 dimers bind in a sequential fashion forming a multimeric L10(L12)X complex. Post-translationally, one or more lysine residues are methylated.

Forms part of the ribosomal stalk which helps the ribosome interact with GTP-bound translation factors. In Sulfurimonas denitrificans (strain ATCC 33889 / DSM 1251) (Thiomicrospira denitrificans (strain ATCC 33889 / DSM 1251)), this protein is Large ribosomal subunit protein uL11.